We begin with the raw amino-acid sequence, 428 residues long: MFVDQVKVYVKGGDGGNGMVAFRREKYVPKGGPAGGDGGNGADVVFEVDEGLRTLMDFRYKRHFKADRGEHGMSKNQHGRNAEEMIVKVPPGTVVTDAETEQVLADLTEHGQRAVIAKGGRGGRGNSRFATPANPAPQLSENGEPGKERDVILELKVLADVGLVGFPSVGKSTLLSIVSSAKPKIADYHFTTLVPNLGVVETDDNRSFVMADLPGLIEGAHEGVGLGHQFLRHIERTRVIVHVIDMSALEGRDPYEDYVTINEELEQYNMRLTERPQIIVANKMDMPDAADNLAAFKEKLTDDYKVFPISAITREGLRELLFEIANQLETTPEFPLYNEEELSDNRVMYRFDEGDAPFEITRDPDGTFVITGKALERLFKMTDFSRDESVKRFSRQLRGMGVDDALRERGAQDGDIIRLLEFEFEFID.

In terms of domain architecture, Obg spans 1-158; sequence MFVDQVKVYV…RDVILELKVL (158 aa). The disordered stretch occupies residues 118–145; it reads KGGRGGRGNSRFATPANPAPQLSENGEP. An OBG-type G domain is found at 159 to 329; that stretch reads ADVGLVGFPS…LLFEIANQLE (171 aa). Residues 165-172, 190-194, 212-215, 282-285, and 310-312 each bind GTP; these read GFPSVGKS, FTTLV, DLPG, NKMD, and SAI. Ser172 and Thr192 together coordinate Mg(2+). One can recognise an OCT domain in the interval 350–428; that stretch reads RFDEGDAPFE…LLEFEFEFID (79 aa).

It belongs to the TRAFAC class OBG-HflX-like GTPase superfamily. OBG GTPase family. In terms of assembly, monomer. Mg(2+) is required as a cofactor.

The protein resides in the cytoplasm. In terms of biological role, an essential GTPase which binds GTP, GDP and possibly (p)ppGpp with moderate affinity, with high nucleotide exchange rates and a fairly low GTP hydrolysis rate. Plays a role in control of the cell cycle, stress response, ribosome biogenesis and in those bacteria that undergo differentiation, in morphogenesis control. This chain is GTPase Obg, found in Bacillus pumilus (strain SAFR-032).